We begin with the raw amino-acid sequence, 124 residues long: S-adenosylmethionine decarboxylase proenzyme (124 aa).

Ser-71 (schiff-base intermediate with substrate; via pyruvic acid) is an active-site residue. Ser-71 is modified (pyruvic acid (Ser); by autocatalysis). His-76 acts as the Proton acceptor; for processing activity in catalysis. Catalysis depends on Cys-91, which acts as the Proton donor; for catalytic activity.

Belongs to the prokaryotic AdoMetDC family. Type 1 subfamily. In terms of assembly, heterotetramer of two alpha and two beta chains arranged as a dimer of alpha/beta heterodimers. Pyruvate serves as cofactor. Post-translationally, is synthesized initially as an inactive proenzyme. Formation of the active enzyme involves a self-maturation process in which the active site pyruvoyl group is generated from an internal serine residue via an autocatalytic post-translational modification. Two non-identical subunits are generated from the proenzyme in this reaction, and the pyruvate is formed at the N-terminus of the alpha chain, which is derived from the carboxyl end of the proenzyme. The post-translation cleavage follows an unusual pathway, termed non-hydrolytic serinolysis, in which the side chain hydroxyl group of the serine supplies its oxygen atom to form the C-terminus of the beta chain, while the remainder of the serine residue undergoes an oxidative deamination to produce ammonia and the pyruvoyl group blocking the N-terminus of the alpha chain.

It catalyses the reaction S-adenosyl-L-methionine + H(+) = S-adenosyl 3-(methylsulfanyl)propylamine + CO2. The protein operates within amine and polyamine biosynthesis; S-adenosylmethioninamine biosynthesis; S-adenosylmethioninamine from S-adenosyl-L-methionine: step 1/1. Competitively inhibited by methylglyoxal bis-guanylhydrazone. Irreversibly inhibited by NaBH(4) in vitro. In terms of biological role, catalyzes the decarboxylation of S-adenosylmethionine to S-adenosylmethioninamine (dcAdoMet), the propylamine donor required for the synthesis of the polyamines spermine and spermidine from the diamine putrescine. Has no arginine decarboxylase (ArgDC) activity. The chain is S-adenosylmethionine decarboxylase proenzyme (speH) from Saccharolobus solfataricus (strain ATCC 35092 / DSM 1617 / JCM 11322 / P2) (Sulfolobus solfataricus).